The primary structure comprises 151 residues: MITDTCILHIEEVLELLPHRFPFLLVDRVLNFEKGKFLRAVKNVSFNEPFFQGHFPGKPIFPGVLILEAMAQATGILAFKSMGKLAPGEFYYFAAIDEARFKRPVQPGDQMILNVEFIKERCGVARFKGIATVNEEMACEASMMCARRKEI.

The active site involves histidine 54.

The protein belongs to the thioester dehydratase family. FabZ subfamily.

The protein localises to the cytoplasm. The catalysed reaction is a (3R)-hydroxyacyl-[ACP] = a (2E)-enoyl-[ACP] + H2O. Involved in unsaturated fatty acids biosynthesis. Catalyzes the dehydration of short chain beta-hydroxyacyl-ACPs and long chain saturated and unsaturated beta-hydroxyacyl-ACPs. The polypeptide is 3-hydroxyacyl-[acyl-carrier-protein] dehydratase FabZ (Blochmanniella floridana).